Consider the following 102-residue polypeptide: Large ribosomal subunit protein bL21 (102 aa).

This sequence belongs to the bacterial ribosomal protein bL21 family. In terms of assembly, part of the 50S ribosomal subunit. Contacts protein L20.

Its function is as follows. This protein binds to 23S rRNA in the presence of protein L20. The sequence is that of Large ribosomal subunit protein bL21 from Ehrlichia canis (strain Jake).